The chain runs to 293 residues: Nitrogenase iron protein (293 aa).

An ATP-binding site is contributed by 10–17 (GKGGIGKS). Residue C98 participates in [4Fe-4S] cluster binding. Position 101 is an ADP-ribosylarginine; by dinitrogenase reductase ADP-ribosyltransferase (R101). [4Fe-4S] cluster is bound at residue C133.

The protein belongs to the NifH/BchL/ChlL family. Homodimer. [4Fe-4S] cluster serves as cofactor. In terms of processing, the reversible ADP-ribosylation of Arg-101 inactivates the nitrogenase reductase and regulates nitrogenase activity.

The enzyme catalyses N2 + 8 reduced [2Fe-2S]-[ferredoxin] + 16 ATP + 16 H2O = H2 + 8 oxidized [2Fe-2S]-[ferredoxin] + 2 NH4(+) + 16 ADP + 16 phosphate + 6 H(+). In terms of biological role, the key enzymatic reactions in nitrogen fixation are catalyzed by the nitrogenase complex, which has 2 components: the iron protein and the molybdenum-iron protein. The polypeptide is Nitrogenase iron protein (Pectobacterium atrosepticum (strain SCRI 1043 / ATCC BAA-672) (Erwinia carotovora subsp. atroseptica)).